Consider the following 602-residue polypeptide: Multicopper oxidase aurL2 (602 aa).

The signal sequence occupies residues 1–17 (MLFRFLALLPFVAGAFA). Plastocyanin-like domains are found at residues 38-149 (DIKI…VRDA) and 160-317 (IPLL…KYRC). Residues N52 and N80 are each glycosylated (N-linked (GlcNAc...) asparagine). The Cu cation site is built by H84, H86, H130, and H132. N-linked (GlcNAc...) asparagine glycans are attached at residues N201, N247, N337, N383, N387, N419, and N424. A Plastocyanin-like 3 domain is found at 421–556 (TTPNYTLALE…QVMGMATVWV (136 aa)). H469 is a binding site for Cu cation. N482 and N486 each carry an N-linked (GlcNAc...) asparagine glycan.

This sequence belongs to the multicopper oxidase family.

It participates in pigment biosynthesis. In terms of biological role, multicopper oxidase; part of the gene cluster that mediates the biosynthesis of aurofusarin, a red mycelium pigment which is acting as a mycotoxin. The first step is performed by the polyketide synthase which condenses one acetyl-CoA and 6 malonyl-CoA units to form the first intermediate, the cyclic heptaketide and yellow pigment YWA1. The C2 hydroxyl group in the pyrone ring of YWA1 is probably formed during ring closure by an aldol-type cyclization reaction. The dehydratase aurZ then acts as the first tailoring enzyme in the aurofusarin biosynthetic pathway by converting YWA1 to nor-rubrofusarin. Nor-rubrofusarin is then methylated to rubrofusarin by the O-methyltransferase aurJ. Rubrofusarin is then transported across the plasma membrane by the rubrofusarin-specific pump aurT for further enzymatic processing by the extracellular complex composed of GIP1, aurF, aurO and aurS to yield aurofusarin. The sequence is that of Multicopper oxidase aurL2 (aurL2) from Gibberella zeae (strain ATCC MYA-4620 / CBS 123657 / FGSC 9075 / NRRL 31084 / PH-1) (Wheat head blight fungus).